A 247-amino-acid chain; its full sequence is MIKLVLLRHGESQWNRENRFTGWYDIGLSEKGETESRAAGELLKKEGFTFDVAFTSVLKRAIGTLWNVLEGMDLMWIPVFKNWRLNERHYGALQGMNKAETAQQHGDEQVLVWRRSYDTPPPPLEKNDPRFPGNDPRYATLAPEEVPVTECLKDTVDRFLPLWNDEIAPMIRSGKRVIIAAHGNSLRALVKYLDNISEEDIVGLNIPTGVPLVYELDDDLKPLKSYYLGDQEELQKAIDSVANQGKA.

Residues 8–15 (RHGESQWN), 21–22 (TG), R60, 87–90 (ERHY), K98, 114–115 (RR), and 183–184 (GN) each bind substrate. H9 acts as the Tele-phosphohistidine intermediate in catalysis. The active-site Proton donor/acceptor is E87.

Belongs to the phosphoglycerate mutase family. BPG-dependent PGAM subfamily.

The enzyme catalyses (2R)-2-phosphoglycerate = (2R)-3-phosphoglycerate. It participates in carbohydrate degradation; glycolysis; pyruvate from D-glyceraldehyde 3-phosphate: step 3/5. In terms of biological role, catalyzes the interconversion of 2-phosphoglycerate and 3-phosphoglycerate. This chain is 2,3-bisphosphoglycerate-dependent phosphoglycerate mutase, found in Chlorobium phaeobacteroides (strain BS1).